Reading from the N-terminus, the 391-residue chain is Processive diacylglycerol beta-glucosyltransferase (391 aa).

The protein belongs to the glycosyltransferase 28 family. UgtP subfamily.

The protein resides in the cell membrane. It carries out the reaction a 1,2-diacyl-3-O-(beta-D-glucopyranosyl)-sn-glycerol + UDP-alpha-D-glucose = a 1,2-diacyl-3-O-(beta-D-Glc-(1-&gt;6)-beta-D-Glc)-sn-glycerol + UDP + H(+). It catalyses the reaction a 1,2-diacyl-sn-glycerol + UDP-alpha-D-glucose = a 1,2-diacyl-3-O-(beta-D-glucopyranosyl)-sn-glycerol + UDP + H(+). It participates in glycolipid metabolism; diglucosyl-diacylglycerol biosynthesis. Its function is as follows. Processive glucosyltransferase involved in the biosynthesis of both the bilayer- and non-bilayer-forming membrane glucolipids. Is able to successively transfer two glucosyl residues to diacylglycerol (DAG), thereby catalyzing the formation of beta-monoglucosyl-DAG (3-O-(beta-D-glucopyranosyl)-1,2-diacyl-sn-glycerol) and beta-diglucosyl-DAG (3-O-(beta-D-glucopyranosyl-beta-(1-&gt;6)-D-glucopyranosyl)-1,2-diacyl-sn-glycerol). Beta-diglucosyl-DAG is the predominant glycolipid found in Bacillales and is also used as a membrane anchor for lipoteichoic acid (LTA). The protein is Processive diacylglycerol beta-glucosyltransferase of Staphylococcus carnosus (strain TM300).